The following is a 77-amino-acid chain: Liver-expressed antimicrobial peptide 2 (77 aa).

Positions 1 to 22 (MWHLKLFAVLMICLLLLAQVDG) are cleaved as a signal peptide. A propeptide spanning residues 23–37 (SPIPQQSSAKRRPRR) is cleaved from the precursor. 2 cysteine pairs are disulfide-bonded: Cys54/Cys65 and Cys60/Cys70.

It belongs to the LEAP2 family.

It localises to the secreted. Functionally, has an antimicrobial activity. In Bos taurus (Bovine), this protein is Liver-expressed antimicrobial peptide 2 (LEAP2).